The following is a 344-amino-acid chain: 2-methyl-6-phytyl-1,4-hydroquinone methyltransferase, chloroplastic (344 aa).

The transit peptide at 1-62 (MACSMLNGVD…LTTVTKCTLS (62 aa)) directs the protein to the chloroplast. Over 63 to 313 (ASERPASQPR…PVHPLVFLYR (251 aa)) the chain is Chloroplast intermembrane. Positions 121–130 (VVDVGGGTGF) are SAM motif I. Residues 166 to 179 (CRIIEGDAEDLPFP) form an SAM motif II region. Residues 207–220 (RVLKLGGKACLIGP) are SAM motif III. The helical transmembrane segment at 314 to 334 (FLLGALASTYYVLVPIYMWIK) threads the bilayer. Topologically, residues 335–344 (DKIFPKGMPL) are stromal.

The protein belongs to the class I-like SAM-binding methyltransferase superfamily. MPBQ/MBSQ MT family.

It is found in the plastid. Its subcellular location is the chloroplast inner membrane. It carries out the reaction 2-methyl-6-phytyl-1,4-benzene-1,4-diol + S-adenosyl-L-methionine = 2,3-dimethyl-6-phytylbenzene-1,4-diol + S-adenosyl-L-homocysteine + H(+). The catalysed reaction is 2-methyl-6-(all-trans-nonaprenyl)benzene-1,4-diol + S-adenosyl-L-methionine = plastoquinol-9 + S-adenosyl-L-homocysteine + H(+). The enzyme catalyses 6-geranylgeranyl-2-methylbenzene-1,4-diol + S-adenosyl-L-methionine = 6-geranylgeranyl-2,3-dimethylbenzene-1,4-diol + S-adenosyl-L-homocysteine + H(+). It participates in cofactor biosynthesis; tocopherol biosynthesis. Involved in a key methylation step in both tocopherols (vitamin E) and plastoquinone synthesis. Catalyzes the conversion of 2-methyl-6-phytyl-1,4-hydroquinone (MPBQ) to 2,3-dimethyl-6-phytyl-1,4-hydroquinone (DMPQ, a substrate for tocopherol cyclase), and 2-methyl-6-solanyl-1,4-benzoquinone (MSBQ) to plastoquinone. The sequence is that of 2-methyl-6-phytyl-1,4-hydroquinone methyltransferase, chloroplastic from Spinacia oleracea (Spinach).